The chain runs to 180 residues: Large ribosomal subunit protein uL5 (180 aa).

This sequence belongs to the universal ribosomal protein uL5 family. Part of the 50S ribosomal subunit; part of the 5S rRNA/L5/L18/L25 subcomplex. Contacts the 5S rRNA and the P site tRNA. Forms a bridge to the 30S subunit in the 70S ribosome.

In terms of biological role, this is one of the proteins that bind and probably mediate the attachment of the 5S RNA into the large ribosomal subunit, where it forms part of the central protuberance. In the 70S ribosome it contacts protein S13 of the 30S subunit (bridge B1b), connecting the 2 subunits; this bridge is implicated in subunit movement. Contacts the P site tRNA; the 5S rRNA and some of its associated proteins might help stabilize positioning of ribosome-bound tRNAs. This chain is Large ribosomal subunit protein uL5, found in Streptococcus uberis (strain ATCC BAA-854 / 0140J).